A 312-amino-acid polypeptide reads, in one-letter code: Glyceraldehyde-3-phosphate dehydrogenase, cytosolic (312 aa).

Residues 5–6 (RI) and D27 each bind NAD(+). D-glyceraldehyde 3-phosphate-binding positions include 144 to 146 (SCT), T175, 204 to 205 (TG), and R227. The active-site Nucleophile is C145. N309 lines the NAD(+) pocket.

It belongs to the glyceraldehyde-3-phosphate dehydrogenase family. In terms of assembly, homotetramer.

It is found in the cytoplasm. It carries out the reaction D-glyceraldehyde 3-phosphate + phosphate + NAD(+) = (2R)-3-phospho-glyceroyl phosphate + NADH + H(+). Its pathway is carbohydrate degradation; glycolysis; pyruvate from D-glyceraldehyde 3-phosphate: step 1/5. In terms of biological role, key enzyme in glycolysis that catalyzes the first step of the pathway by converting D-glyceraldehyde 3-phosphate (G3P) into 3-phospho-D-glyceroyl phosphate. Essential for the maintenance of cellular ATP levels and carbohydrate metabolism. The sequence is that of Glyceraldehyde-3-phosphate dehydrogenase, cytosolic (GapC) from Scenedesmus vacuolatus (Green alga).